A 406-amino-acid polypeptide reads, in one-letter code: Mitochondrial potassium channel (406 aa).

The transit peptide at 1–35 (MTGCSPVFAMQHVVGVPRILVRRTFLGTDVTMTRT) directs the protein to the mitochondrion. Residues 36–198 (LCSPGPREKR…KERTRAERTK (163 aa)) lie on the Mitochondrial matrix side of the membrane. Positions 113–140 (VREAREGLEAQQTKLKEVRDRLDRVSRE) form a coiled coil. A helical membrane pass occupies residues 199–219 (NWSLIGSVLGALIGVAGSTYV). Residues 220-382 (NRVRLQELKA…LEAQANRNTV (163 aa)) are Mitochondrial intermembrane-facing. The chain crosses the membrane as a helical span at residues 383-403 (SSTLVTCVTFLATLPLLYMLF). Topologically, residues 404-406 (KTS) are mitochondrial matrix.

As to quaternary structure, the mitochondrial potassium channel (mitoK(ATP)) is composed of 4 subunits of CCDC51/MITOK and 4 subunits of ABCB8/MITOSUR.

Its subcellular location is the mitochondrion inner membrane. It carries out the reaction K(+)(in) = K(+)(out). Its activity is regulated as follows. Inhibited by ATP via mitoK(ATP) channel. Functionally, pore-forming subunit of the mitochondrial ATP-gated potassium channel (mitoK(ATP)). Together with ATP-binding subunit ABCB8/MITOSUR of the mitoK(ATP) channel, mediates ATP-dependent K(+) currents across the mitochondrial inner membrane. An increase in ATP intracellular levels closes the channel, inhibiting K(+) transport, whereas a decrease in ATP levels enhances K(+) uptake in the mitochondrial matrix. May contribute to the homeostatic control of cellular metabolism under stress conditions by regulating the mitochondrial matrix volume. This chain is Mitochondrial potassium channel, found in Mus musculus (Mouse).